Consider the following 124-residue polypeptide: Small ribosomal subunit protein uS13 (124 aa).

Residues 94–117 (NLPVRGQRTRTNARTRKGPRKTVA) show a composition bias toward basic residues. The segment at 94-124 (NLPVRGQRTRTNARTRKGPRKTVANKKIESK) is disordered.

Belongs to the universal ribosomal protein uS13 family. In terms of assembly, part of the 30S ribosomal subunit. Forms a loose heterodimer with protein S19. Forms two bridges to the 50S subunit in the 70S ribosome.

Located at the top of the head of the 30S subunit, it contacts several helices of the 16S rRNA. In the 70S ribosome it contacts the 23S rRNA (bridge B1a) and protein L5 of the 50S subunit (bridge B1b), connecting the 2 subunits; these bridges are implicated in subunit movement. Contacts the tRNAs in the A and P-sites. This chain is Small ribosomal subunit protein uS13, found in Mycoplasma pneumoniae (strain ATCC 29342 / M129 / Subtype 1) (Mycoplasmoides pneumoniae).